We begin with the raw amino-acid sequence, 503 residues long: Aspartyl/glutamyl-tRNA(Asn/Gln) amidotransferase subunit B (503 aa).

This sequence belongs to the GatB/GatE family. GatB subfamily. In terms of assembly, heterotrimer of A, B and C subunits.

The catalysed reaction is L-glutamyl-tRNA(Gln) + L-glutamine + ATP + H2O = L-glutaminyl-tRNA(Gln) + L-glutamate + ADP + phosphate + H(+). It carries out the reaction L-aspartyl-tRNA(Asn) + L-glutamine + ATP + H2O = L-asparaginyl-tRNA(Asn) + L-glutamate + ADP + phosphate + 2 H(+). Functionally, allows the formation of correctly charged Asn-tRNA(Asn) or Gln-tRNA(Gln) through the transamidation of misacylated Asp-tRNA(Asn) or Glu-tRNA(Gln) in organisms which lack either or both of asparaginyl-tRNA or glutaminyl-tRNA synthetases. The reaction takes place in the presence of glutamine and ATP through an activated phospho-Asp-tRNA(Asn) or phospho-Glu-tRNA(Gln). This chain is Aspartyl/glutamyl-tRNA(Asn/Gln) amidotransferase subunit B, found in Ruegeria pomeroyi (strain ATCC 700808 / DSM 15171 / DSS-3) (Silicibacter pomeroyi).